The sequence spans 378 residues: Glutamate 5-kinase (378 aa).

ATP is bound at residue Lys19. Substrate contacts are provided by Ser60, Asp147, and Asn159. ATP is bound by residues 179 to 180 (SD) and 221 to 227 (SGGMRTK). In terms of domain architecture, PUA spans 285 to 362 (KGTLTIDAGA…GEMEQLLGYR (78 aa)).

The protein belongs to the glutamate 5-kinase family.

It is found in the cytoplasm. The enzyme catalyses L-glutamate + ATP = L-glutamyl 5-phosphate + ADP. The protein operates within amino-acid biosynthesis; L-proline biosynthesis; L-glutamate 5-semialdehyde from L-glutamate: step 1/2. Functionally, catalyzes the transfer of a phosphate group to glutamate to form L-glutamate 5-phosphate. In Gluconobacter oxydans (strain 621H) (Gluconobacter suboxydans), this protein is Glutamate 5-kinase.